A 251-amino-acid polypeptide reads, in one-letter code: Imidazole glycerol phosphate synthase subunit HisF (251 aa).

Catalysis depends on residues D11 and D130.

The protein belongs to the HisA/HisF family. As to quaternary structure, heterodimer of HisH and HisF.

The protein localises to the cytoplasm. The catalysed reaction is 5-[(5-phospho-1-deoxy-D-ribulos-1-ylimino)methylamino]-1-(5-phospho-beta-D-ribosyl)imidazole-4-carboxamide + L-glutamine = D-erythro-1-(imidazol-4-yl)glycerol 3-phosphate + 5-amino-1-(5-phospho-beta-D-ribosyl)imidazole-4-carboxamide + L-glutamate + H(+). Its pathway is amino-acid biosynthesis; L-histidine biosynthesis; L-histidine from 5-phospho-alpha-D-ribose 1-diphosphate: step 5/9. Its function is as follows. IGPS catalyzes the conversion of PRFAR and glutamine to IGP, AICAR and glutamate. The HisF subunit catalyzes the cyclization activity that produces IGP and AICAR from PRFAR using the ammonia provided by the HisH subunit. This chain is Imidazole glycerol phosphate synthase subunit HisF, found in Listeria monocytogenes serotype 4b (strain CLIP80459).